We begin with the raw amino-acid sequence, 134 residues long: Protein E6 (134 aa).

2 zinc fingers span residues 15–51 (CLQC…CQIC) and 88–124 (CYYC…CYSC).

It belongs to the papillomaviridae E6 protein family. As to quaternary structure, forms homodimers. Interacts with ubiquitin-protein ligase UBE3A/E6-AP; this interaction stimulates UBE3A ubiquitin activity. Interacts with host BAK1.

Its subcellular location is the host cytoplasm. It localises to the host nucleus. Its function is as follows. Plays a major role in the induction and maintenance of cellular transformation. E6 associates with host UBE3A/E6-AP ubiquitin-protein ligase and modulates its activity. Protects host keratinocytes from apoptosis by mediating the degradation of host BAK1. May also inhibit host immune response. The polypeptide is Protein E6 (Bos taurus (Bovine)).